The chain runs to 149 residues: Nucleoside diphosphate kinase (149 aa).

The ATP site is built by Lys9, Phe57, Arg85, Thr91, Arg102, and Asn112. His115 acts as the Pros-phosphohistidine intermediate in catalysis.

It belongs to the NDK family. In terms of assembly, homotetramer. It depends on Mg(2+) as a cofactor.

It localises to the cytoplasm. The catalysed reaction is a 2'-deoxyribonucleoside 5'-diphosphate + ATP = a 2'-deoxyribonucleoside 5'-triphosphate + ADP. It carries out the reaction a ribonucleoside 5'-diphosphate + ATP = a ribonucleoside 5'-triphosphate + ADP. Major role in the synthesis of nucleoside triphosphates other than ATP. The ATP gamma phosphate is transferred to the NDP beta phosphate via a ping-pong mechanism, using a phosphorylated active-site intermediate. The chain is Nucleoside diphosphate kinase from Heliobacterium modesticaldum (strain ATCC 51547 / Ice1).